The primary structure comprises 335 residues: UPF0353 protein MT1528 (335 aa).

2 helical membrane-spanning segments follow: residues W18–L38 and V67–T87. Residues V98–L294 form the VWFA domain. The chain crosses the membrane as a helical span at residues V309–I329.

The protein belongs to the UPF0353 family.

Its subcellular location is the cell membrane. The polypeptide is UPF0353 protein MT1528 (Mycobacterium tuberculosis (strain CDC 1551 / Oshkosh)).